Here is a 393-residue protein sequence, read N- to C-terminus: Acetyl-CoA acetyltransferase (393 aa).

Cys88 functions as the Acyl-thioester intermediate in the catalytic mechanism. Catalysis depends on proton acceptor residues His349 and Cys379.

This sequence belongs to the thiolase-like superfamily. Thiolase family. As to quaternary structure, homotetramer.

It localises to the cytoplasm. The enzyme catalyses 2 acetyl-CoA = acetoacetyl-CoA + CoA. It functions in the pathway biopolymer metabolism; poly-(R)-3-hydroxybutanoate biosynthesis. The condensation reaction is inhibited by free CoA. The cleavage reaction is characterized by substrate inhibition by acetoacetyl-CoA, which is partially relieved by free CoA. Its function is as follows. Catalyzes the condensation of two acetyl-coA units to form acetoacetyl-CoA. Is involved in the biosynthesis of polyhydroxybutyrate (PHB), which is accumulated as an intracellular energy reserve material when cells grow under conditions of nutrient limitation. Also catalyzes the reverse reaction, i.e. the cleavage of acetoacetyl-CoA, and is therefore also involved in the reutilization of PHB. The polypeptide is Acetyl-CoA acetyltransferase (Cupriavidus necator (strain ATCC 17699 / DSM 428 / KCTC 22496 / NCIMB 10442 / H16 / Stanier 337) (Ralstonia eutropha)).